Reading from the N-terminus, the 536-residue chain is Chaperonin GroEL (536 aa).

Residues 29-32 (TLGP), 86-90 (DGTTT), G412, and D493 each bind ATP.

The protein belongs to the chaperonin (HSP60) family. As to quaternary structure, forms a cylinder of 14 subunits composed of two heptameric rings stacked back-to-back. Interacts with the co-chaperonin GroES.

Its subcellular location is the cytoplasm. It carries out the reaction ATP + H2O + a folded polypeptide = ADP + phosphate + an unfolded polypeptide.. In terms of biological role, together with its co-chaperonin GroES, plays an essential role in assisting protein folding. The GroEL-GroES system forms a nano-cage that allows encapsulation of the non-native substrate proteins and provides a physical environment optimized to promote and accelerate protein folding. The chain is Chaperonin GroEL from Aster yellows witches'-broom phytoplasma (strain AYWB).